Here is a 198-residue protein sequence, read N- to C-terminus: Guanylate kinase (198 aa).

Residues 6–192 enclose the Guanylate kinase-like domain; the sequence is KSIVIFTGPS…AAQEIREILH (187 aa). Residue 13 to 20 participates in ATP binding; that stretch reads GPSGVGKG.

The protein belongs to the guanylate kinase family.

It localises to the cytoplasm. The enzyme catalyses GMP + ATP = GDP + ADP. Essential for recycling GMP and indirectly, cGMP. The sequence is that of Guanylate kinase from Mycoplasmopsis synoviae (strain 53) (Mycoplasma synoviae).